The sequence spans 262 residues: Acyl-[acyl-carrier-protein]--UDP-N-acetylglucosamine O-acyltransferase (262 aa).

It belongs to the transferase hexapeptide repeat family. LpxA subfamily. As to quaternary structure, homotrimer.

The protein resides in the cytoplasm. It carries out the reaction a (3R)-hydroxyacyl-[ACP] + UDP-N-acetyl-alpha-D-glucosamine = a UDP-3-O-[(3R)-3-hydroxyacyl]-N-acetyl-alpha-D-glucosamine + holo-[ACP]. It functions in the pathway glycolipid biosynthesis; lipid IV(A) biosynthesis; lipid IV(A) from (3R)-3-hydroxytetradecanoyl-[acyl-carrier-protein] and UDP-N-acetyl-alpha-D-glucosamine: step 1/6. Involved in the biosynthesis of lipid A, a phosphorylated glycolipid that anchors the lipopolysaccharide to the outer membrane of the cell. This chain is Acyl-[acyl-carrier-protein]--UDP-N-acetylglucosamine O-acyltransferase, found in Campylobacter curvus (strain 525.92).